A 701-amino-acid chain; its full sequence is Pentatricopeptide repeat-containing protein At5g50390, chloroplastic (701 aa).

Residues 1 to 47 (MEIPLSRYQSIRLDEIRDSSSNPKVLTFPRKFSLRGRRWKNPFGRLS) constitute a chloroplast transit peptide. PPR repeat units follow at residues 86-116 (SGVTICSQIEKLVLCNRFREAFELFEILEIR), 122-156 (GVSTYDALVEACIRLKSIRCVKRVYGFMMSNGFEP), 157-187 (EQYMMNRILLMHVKCGMIIDARRLFDEIPER), 188-218 (NLYSYYSIISGFVNFGNYVEAFELFKMMWEE), 223-257 (ETHTFAVMLRASAGLGSIYVGKQLHVCALKLGVVD), 258-288 (NTFVSCGLIDMYSKCGDIEDARCAFECMPEK), 289-323 (TTVAWNNVIAGYALHGYSEEALCLLYDMRDSGVSI), 324-358 (DQFTLSIMIRISTKLAKLELTKQAHASLIRNGFES), 359-389 (EIVANTALVDFYSKWGRVDTARYVFDKLPRK), 390-424 (NIISWNALMGGYANHGRGTDAVKLFEKMIAANVAP), 425-460 (NHVTFLAVLSACAYSGLSEQGWEIFLSMSEVHGIKP), and 461-491 (RAMHYACMIELLGRDGLLDEAIAFIRRAPLK). The tract at residues 496–571 (MWAALLNACR…MPACTWVEVG (76 aa)) is type E motif. Residues 572 to 606 (DQTHSFLSGDRFDSYNETVKRQIYQKVDELMEEIS) are type E(+) motif; degenerate. Residues 607–701 (EYGYSEEEQH…EGKCSCGGYW (95 aa)) form a type DYW motif region.

Belongs to the PPR family. PCMP-H subfamily.

It is found in the plastid. The protein resides in the chloroplast. This chain is Pentatricopeptide repeat-containing protein At5g50390, chloroplastic (PCMP-H58), found in Arabidopsis thaliana (Mouse-ear cress).